We begin with the raw amino-acid sequence, 89 residues long: Small ribosomal subunit protein uS15 (89 aa).

It belongs to the universal ribosomal protein uS15 family. As to quaternary structure, part of the 30S ribosomal subunit. Forms a bridge to the 50S subunit in the 70S ribosome, contacting the 23S rRNA.

One of the primary rRNA binding proteins, it binds directly to 16S rRNA where it helps nucleate assembly of the platform of the 30S subunit by binding and bridging several RNA helices of the 16S rRNA. In terms of biological role, forms an intersubunit bridge (bridge B4) with the 23S rRNA of the 50S subunit in the ribosome. This is Small ribosomal subunit protein uS15 from Acidiphilium cryptum (strain JF-5).